Reading from the N-terminus, the 207-residue chain is Small ribosomal subunit protein uS4 (207 aa).

Positions 31-53 are disordered; sequence KAKFDSKPGQHGRTSGARTSDYG. In terms of domain architecture, S4 RNA-binding spans 97-157; the sequence is CRLDNVVYRM…EKSKKQARIV (61 aa).

Belongs to the universal ribosomal protein uS4 family. As to quaternary structure, part of the 30S ribosomal subunit. Contacts protein S5. The interaction surface between S4 and S5 is involved in control of translational fidelity.

One of the primary rRNA binding proteins, it binds directly to 16S rRNA where it nucleates assembly of the body of the 30S subunit. Its function is as follows. With S5 and S12 plays an important role in translational accuracy. The polypeptide is Small ribosomal subunit protein uS4 (Acidovorax ebreus (strain TPSY) (Diaphorobacter sp. (strain TPSY))).